The chain runs to 430 residues: Putrescine 2-hydroxylase (430 aa).

In terms of domain architecture, Rieske spans 88-203; the sequence is LYVGHQKLVP…LRDCHGLLFE (116 aa). Positions 128, 130, 162, and 165 each coordinate [2Fe-2S] cluster.

It belongs to the bacterial ring-hydroxylating dioxygenase alpha subunit family. Requires [2Fe-2S] cluster as cofactor.

Functionally, rieske-type iron sulfur protein that can catalyze in vitro the 2-hydroxylation of putrescine, forming 2-hydroxyputrescine. May be involved in the biosynthesis of the cyclic hydroxamate siderophore alcaligin. The sequence is that of Putrescine 2-hydroxylase from Bordetella bronchiseptica (strain ATCC BAA-588 / NCTC 13252 / RB50) (Alcaligenes bronchisepticus).